A 593-amino-acid polypeptide reads, in one-letter code: Actin-histidine N-methyltransferase (593 aa).

Positions 1–21 (MGKKSRVKTQKSGTGATAAVS) are disordered. Residues arginine 75, 104 to 106 (EGF), arginine 254, 275 to 279 (DMCNH), and 325 to 327 (SGF) each bind S-adenosyl-L-methionine. The region spanning 94–314 (EGFEIANFEE…AGEQIYIFYG (221 aa)) is the SET domain. The interval 549–593 (GFVNGENSLFNGTKSESENLIKEESNRETEDAKESSSESTDEVKE) is disordered. Over residues 553 to 562 (GENSLFNGTK) the composition is skewed to polar residues. Residues 563 to 593 (SESENLIKEESNRETEDAKESSSESTDEVKE) are compositionally biased toward basic and acidic residues.

The protein belongs to the class V-like SAM-binding methyltransferase superfamily. SETD3 actin-histidine methyltransferase family.

The protein resides in the cytoplasm. It catalyses the reaction L-histidyl-[protein] + S-adenosyl-L-methionine = N(tele)-methyl-L-histidyl-[protein] + S-adenosyl-L-homocysteine + H(+). In terms of biological role, protein-histidine N-methyltransferase that specifically mediates 3-methylhistidine (tele-methylhistidine) methylation of actin at 'His-73'. Does not have protein-lysine N-methyltransferase activity and probably only catalyzes histidine methylation of actin. In Gallus gallus (Chicken), this protein is Actin-histidine N-methyltransferase.